A 941-amino-acid polypeptide reads, in one-letter code: Pre-mRNA-processing factor 6 (941 aa).

A disordered region spans residues 1 to 79 (MNKKKKPFLG…DEDLNDTNYD (79 aa)). Basic and acidic residues predominate over residues 39-65 (DANDPVDDRHAPPGKRTVGDQMKKNQA). The span at 66-78 (ADDDDEDLNDTNY) shows a compositional bias: acidic residues. S143 is modified (phosphoserine). Phosphothreonine is present on residues T180, T266, and T275. S279 carries the phosphoserine modification. 9 HAT repeats span residues 384–416 (TDIR…LEEP), 418–444 (DARI…ARLE), 445–476 (TYEN…LEEA), 554–586 (NALE…FEKN), 588–620 (GTRE…SKWL), 622–654 (GDVP…LESE), 689–721 (GNIT…IEEQ), 723–755 (ELME…LEEK), and 855–887 (RKIT…FELQ).

In terms of assembly, identified in the spliceosome B complex. Identified in the spliceosome C complex. Associates with the U5 snRNP particle. Component of the U4/U6-U5 tri-snRNP complex composed of the U4, U6 and U5 snRNAs and at least PRPF3, PRPF4, PRPF6, PRPF8, PRPF31, SNRNP200, TXNL4A, SNRNP40, DDX23, CD2BP2, PPIH, SNU13, EFTUD2, SART1 and USP39, LSm proteins LSm2-8 and Sm proteins. Interacts with ARAF1. Interacts with AR and NR3C1, but not ESR1, independently of the presence of hormones. Interacts with USH1G. Post-translationally, phosphorylated by PRP4K during spliceosome assembly.

It is found in the nucleus. It localises to the nucleoplasm. The protein resides in the nucleus speckle. Involved in pre-mRNA splicing as component of the U4/U6-U5 tri-snRNP complex, one of the building blocks of the spliceosome. Enhances dihydrotestosterone-induced transactivation activity of AR, as well as dexamethasone-induced transactivation activity of NR3C1, but does not affect estrogen-induced transactivation. This chain is Pre-mRNA-processing factor 6 (Prpf6), found in Rattus norvegicus (Rat).